Consider the following 314-residue polypeptide: Elongator complex protein 5 (314 aa).

The protein belongs to the ELP5 family. In terms of assembly, component of the elongator complex.

It localises to the cytoplasm. The protein localises to the nucleus. It participates in tRNA modification; 5-methoxycarbonylmethyl-2-thiouridine-tRNA biosynthesis. Component of the elongator complex, a multiprotein complex which is required for multiple tRNA modifications, including mcm5U (5-methoxycarbonylmethyl uridine), mcm5s2U (5-methoxycarbonylmethyl-2-thiouridine), and ncm5U (5-carbamoylmethyl uridine). The elongator complex catalyzes formation of carboxymethyluridine in the wobble base at position 34 in tRNAs. This Schizosaccharomyces pombe (strain 972 / ATCC 24843) (Fission yeast) protein is Elongator complex protein 5 (iki1).